A 159-amino-acid chain; its full sequence is 6,7-dimethyl-8-ribityllumazine synthase (159 aa).

Residues Y23, 58-60 (AYE), and 82-84 (TII) each bind 5-amino-6-(D-ribitylamino)uracil. H90 (proton donor) is an active-site residue. I115 serves as a coordination point for 5-amino-6-(D-ribitylamino)uracil. R129 is a binding site for (2S)-2-hydroxy-3-oxobutyl phosphate.

The protein belongs to the DMRL synthase family. In terms of assembly, forms an icosahedral capsid composed of 60 subunits, arranged as a dodecamer of pentamers.

The enzyme catalyses (2S)-2-hydroxy-3-oxobutyl phosphate + 5-amino-6-(D-ribitylamino)uracil = 6,7-dimethyl-8-(1-D-ribityl)lumazine + phosphate + 2 H2O + H(+). It participates in cofactor biosynthesis; riboflavin biosynthesis; riboflavin from 2-hydroxy-3-oxobutyl phosphate and 5-amino-6-(D-ribitylamino)uracil: step 1/2. Its function is as follows. Catalyzes the formation of 6,7-dimethyl-8-ribityllumazine by condensation of 5-amino-6-(D-ribitylamino)uracil with 3,4-dihydroxy-2-butanone 4-phosphate. This is the penultimate step in the biosynthesis of riboflavin. This is 6,7-dimethyl-8-ribityllumazine synthase from Buchnera aphidicola subsp. Baizongia pistaciae (strain Bp).